The chain runs to 622 residues: Transcription factor SKN7 (622 aa).

The span at 1–12 shows a compositional bias: polar residues; that stretch reads MSFSTINSNVNK. The tract at residues 1-29 is disordered; it reads MSFSTINSNVNKTTGDSNNNTTENSSTAD. Positions 13–27 are enriched in low complexity; it reads TTGDSNNNTTENSST. Residues 84–190 form a DNA-binding domain region; it reads ANEFVRKLFR…GLDNIKRKIP (107 aa). Residues 212–303 are hydrophobic repeat HR-A/B; sequence TNPNNPSGSL…NNFNTLCSTL (92 aa). Positions 240–260 form a coiled coil; sequence FGNLRRRVDKLQKELDMSKME. A Response regulatory domain is found at 378 to 492; it reads HVLLVEDDAV…DLHSILIRYL (115 aa). Asp-427 is subject to 4-aspartylphosphate. 2 disordered regions span residues 501–579 and 599–622; these read QQLP…QHHN and TVPH…NQLS. Low complexity predominate over residues 512–527; sequence THSNTNTANSNPNTIN. Residues 537–554 show a composition bias toward polar residues; the sequence is DNPSTTTPVTPGASISSA. Residues 555–578 are compositionally biased toward low complexity; that stretch reads QHVQQGQQEQQHQIFHAQQQQQHH. A compositionally biased stretch (polar residues) spans 600–622; sequence VPHSSMGSTPQLPQSTLQENQLS.

The protein belongs to the SKN7 family. As to quaternary structure, homotrimer. In terms of processing, the phosphorelay mechanism involves the sequential transfer of a phosphate group from 'His-576' (H1) to 'Asp-1144' (D1) of SLN1, then to 'His-64' (H2) of YPD1 and finally to Asp-427 (D2) of SKN7.

It is found in the nucleus. Functionally, transcription factor that is part of a SLN1-YPD1-SKN7 two-component regulatory system, which controls gene expression in response to changes in the osmolarity of the extracellular environment. Under low osmotic conditions, phosphorylated and activated by the phosphorelay intermediate protein YPD1. Also activated in response to oxidative stress, independent on the two-component regulatory system. Regulates heat shock genes in response to oxidative stress and genes involved in cell wall integrity in response to osmotic changes. This is Transcription factor SKN7 (SKN7) from Saccharomyces cerevisiae (strain ATCC 204508 / S288c) (Baker's yeast).